The chain runs to 306 residues: uncharacterized protein (306 aa).

Tyr-51 (proton donor) is an active-site residue. 197-207 (GPVAKGLLTEK) is an NADP(+) binding site.

Belongs to the aldo/keto reductase family. Aldo/keto reductase 2 subfamily.

This is an uncharacterized protein from Bacillus subtilis (strain 168).